We begin with the raw amino-acid sequence, 492 residues long: Osmoregulated proline transporter OpuE (492 aa).

The next 13 helical transmembrane spans lie at 3–23 (IEIIISLGIYFIAMLLIGWYA), 40–60 (LGPFVTALSAGAADMSGWMLM), 62–82 (VPGAMFATGLSTLWLALGLTI), 125–145 (IVSALIIMIFFTLYTSSGMVS), 161–181 (GLFLTTAVVVLYTLFGGFLAV), 190–210 (AIMFAALVLVPIVAFTHVGGV), 224–244 (LLDIFKGASVISIISYLAWGL), 271–291 (IGMSWMIITVLGSVLTGLIGV), 314–334 (ILFHPLITGFLLSAILAAIMS), 365–385 (LVMIGRLSVLVIAVIAVLLSL), 394–414 (LVGYAWAGFGSAFGPAILLSL), 424–444 (ALAAMIVGAATVLIWITTGLA), and 449–469 (VYEIIPGFILSMIAGIIVSMI).

The protein belongs to the sodium:solute symporter (SSF) (TC 2.A.21) family.

The protein localises to the cell membrane. It catalyses the reaction L-proline(in) + Na(+)(in) = L-proline(out) + Na(+)(out). In terms of biological role, catalyzes the uptake of extracellular proline under high-osmolarity growth conditions. Essential for the use of proline present in the environment as an osmoprotectant. This is Osmoregulated proline transporter OpuE from Bacillus subtilis (strain 168).